The following is a 500-amino-acid chain: Probable cytosol aminopeptidase (500 aa).

Residues K264 and D269 each contribute to the Mn(2+) site. Residue K276 is part of the active site. Positions 287, 346, and 348 each coordinate Mn(2+). R350 is a catalytic residue.

Belongs to the peptidase M17 family. Requires Mn(2+) as cofactor.

Its subcellular location is the cytoplasm. It carries out the reaction Release of an N-terminal amino acid, Xaa-|-Yaa-, in which Xaa is preferably Leu, but may be other amino acids including Pro although not Arg or Lys, and Yaa may be Pro. Amino acid amides and methyl esters are also readily hydrolyzed, but rates on arylamides are exceedingly low.. The catalysed reaction is Release of an N-terminal amino acid, preferentially leucine, but not glutamic or aspartic acids.. In terms of biological role, presumably involved in the processing and regular turnover of intracellular proteins. Catalyzes the removal of unsubstituted N-terminal amino acids from various peptides. The protein is Probable cytosol aminopeptidase of Chlamydia abortus (strain DSM 27085 / S26/3) (Chlamydophila abortus).